Here is a 923-residue protein sequence, read N- to C-terminus: Protein dct-6 (923 aa).

Residues 312–347 (DMNDQIEQMISLLVDELSELEKLEQLCKEVERTGNQ) are a coiled coil.

May have a role in tumor suppression. This Caenorhabditis elegans protein is Protein dct-6 (dct-6).